Here is a 187-residue protein sequence, read N- to C-terminus: Oligoribonuclease (187 aa).

An Exonuclease domain is found at 7 to 170 (LCWLDMEMTG…DDILESIEEM (164 aa)). Residue tyrosine 128 is part of the active site.

This sequence belongs to the oligoribonuclease family.

The protein resides in the cytoplasm. Functionally, 3'-to-5' exoribonuclease specific for small oligoribonucleotides. The polypeptide is Oligoribonuclease (Neisseria meningitidis serogroup C / serotype 2a (strain ATCC 700532 / DSM 15464 / FAM18)).